A 276-amino-acid polypeptide reads, in one-letter code: Putative pyruvate, phosphate dikinase regulatory protein (276 aa).

151–158 provides a ligand contact to ADP; the sequence is GISRTSKT.

Belongs to the pyruvate, phosphate/water dikinase regulatory protein family. PDRP subfamily.

The enzyme catalyses N(tele)-phospho-L-histidyl/L-threonyl-[pyruvate, phosphate dikinase] + ADP = N(tele)-phospho-L-histidyl/O-phospho-L-threonyl-[pyruvate, phosphate dikinase] + AMP + H(+). It catalyses the reaction N(tele)-phospho-L-histidyl/O-phospho-L-threonyl-[pyruvate, phosphate dikinase] + phosphate + H(+) = N(tele)-phospho-L-histidyl/L-threonyl-[pyruvate, phosphate dikinase] + diphosphate. In terms of biological role, bifunctional serine/threonine kinase and phosphorylase involved in the regulation of the pyruvate, phosphate dikinase (PPDK) by catalyzing its phosphorylation/dephosphorylation. The chain is Putative pyruvate, phosphate dikinase regulatory protein from Streptococcus agalactiae serotype Ia (strain ATCC 27591 / A909 / CDC SS700).